The primary structure comprises 529 residues: Intraflagellar transport protein 56 (529 aa).

The interval 1–21 is disordered; that stretch reads MLHNRMTTAFERSKEQEHEAA. Residues 11 to 21 show a composition bias toward basic and acidic residues; it reads ERSKEQEHEAA. TPR repeat units lie at residues 57–90, 154–187, 189–221, 285–321, 359–392, and 428–461; these read GNADLWIAYCNFHLGRHEEALEIYTALKKSKNPP, SADQMALAAVHFLRTHYQQALECYEEVLQVQPEC, AIYMHMALCYYKLGDYLKSEEFLMLYRENAEDS, SEARQNLVKLYIEKGQYEDAYKVVQSFEPAVSAEYTL, VLGRRAMAAAYFLTGEFEEASMYLESIADIPKES, and PVHRTWLGRLLIRAQRSAEAFDLYRDAEKNSLQT.

It belongs to the IFT56 family.

It is found in the cell projection. It localises to the cilium. Its subcellular location is the flagellum. The protein localises to the cytoplasm. The protein resides in the cytoskeleton. It is found in the flagellum axoneme. It localises to the flagellum basal body. Functionally, component of the intraflagellar transport complex B (IFT-B) involved in flagellar assembly. The protein is Intraflagellar transport protein 56 of Giardia intestinalis (strain ATCC 50803 / WB clone C6) (Giardia lamblia).